The sequence spans 112 residues: Large ribosomal subunit protein uL22 (112 aa).

It belongs to the universal ribosomal protein uL22 family. In terms of assembly, part of the 50S ribosomal subunit.

Its function is as follows. This protein binds specifically to 23S rRNA; its binding is stimulated by other ribosomal proteins, e.g. L4, L17, and L20. It is important during the early stages of 50S assembly. It makes multiple contacts with different domains of the 23S rRNA in the assembled 50S subunit and ribosome. In terms of biological role, the globular domain of the protein is located near the polypeptide exit tunnel on the outside of the subunit, while an extended beta-hairpin is found that lines the wall of the exit tunnel in the center of the 70S ribosome. The protein is Large ribosomal subunit protein uL22 of Anaplasma phagocytophilum (strain HZ).